The following is a 309-amino-acid chain: Probable 2,4-dienoyl-CoA reductase 3 [(3E)-enoyl-CoA-producing] (309 aa).

Residues 32–37 (GGGTGI), Arg57, and Asp83 contribute to the NADP(+) site. Residue Arg57 participates in substrate binding. Residues Phe116 and Ser124 each contribute to the substrate site. Tyr166 functions as the Proton acceptor in the catalytic mechanism. Residues Lys181 and 207 to 210 (PGPI) contribute to the NADP(+) site. Arg218 provides a ligand contact to substrate.

It belongs to the short-chain dehydrogenases/reductases (SDR) family. 2,4-dienoyl-CoA reductase subfamily.

It carries out the reaction a (2E,4E)-dienoyl-CoA + NADPH + H(+) = a 4,5-saturated-(3E)-enoyl-CoA + NADP(+). The enzyme catalyses a (2E,4Z)-dienoyl-CoA + NADPH + H(+) = a 4,5-saturated-(3E)-enoyl-CoA + NADP(+). Auxiliary enzyme of beta-oxidation. It participates in the metabolism of unsaturated fatty enoyl-CoA esters having double bonds in both even- and odd-numbered positions. Catalyzes the NADP-dependent reduction of 2,4-dienoyl-CoA to yield trans-3-enoyl-CoA. This Caenorhabditis elegans protein is Probable 2,4-dienoyl-CoA reductase 3 [(3E)-enoyl-CoA-producing].